The following is a 197-amino-acid chain: ATP-dependent Clp protease proteolytic subunit 1 (197 aa).

Histidine 126 is a catalytic residue.

This sequence belongs to the peptidase S14 family. Fourteen ClpP subunits assemble into 2 heptameric rings which stack back to back to give a disk-like structure with a central cavity, resembling the structure of eukaryotic proteasomes.

It localises to the cytoplasm. It carries out the reaction Hydrolysis of proteins to small peptides in the presence of ATP and magnesium. alpha-casein is the usual test substrate. In the absence of ATP, only oligopeptides shorter than five residues are hydrolyzed (such as succinyl-Leu-Tyr-|-NHMec, and Leu-Tyr-Leu-|-Tyr-Trp, in which cleavage of the -Tyr-|-Leu- and -Tyr-|-Trp bonds also occurs).. Functionally, cleaves peptides in various proteins in a process that requires ATP hydrolysis. Has a chymotrypsin-like activity. Plays a major role in the degradation of misfolded proteins. This chain is ATP-dependent Clp protease proteolytic subunit 1, found in Nocardia farcinica (strain IFM 10152).